A 337-amino-acid chain; its full sequence is Gastrula zinc finger protein XlCGF26.1 (337 aa).

C2H2-type zinc fingers lie at residues 6-28 (FDCT…YKIH), 34-56 (FICA…SKIH), 62-84 (FPCT…NKIH), 90-112 (FICA…SKIH), 118-140 (FPCT…NKIH), 146-168 (FICA…SKIH), 174-196 (FPCT…NKIH), 202-224 (FTCT…VKIH), 230-252 (FTCT…NKIH), 258-280 (FTCT…FKIH), 286-309 (FSCT…KRTH), and 315-337 (FTCT…NKIH).

The protein belongs to the krueppel C2H2-type zinc-finger protein family.

The protein localises to the nucleus. Functionally, may be involved in transcriptional regulation. The protein is Gastrula zinc finger protein XlCGF26.1 of Xenopus laevis (African clawed frog).